A 642-amino-acid polypeptide reads, in one-letter code: uncharacterized protein (642 aa).

Positions 15 and 118 each coordinate Mg(2+). A PINc domain is found at 29–149; sequence VCVDTCVVID…YNLAKAQGIE (121 aa). The 69-residue stretch at 510-578 folds into the KH domain; it reads DNSIDLIVPE…ELESTRIYET (69 aa).

It in the N-terminal section; belongs to the PINc/VapC protein family. Mg(2+) serves as cofactor.

This is an uncharacterized protein from Methanocaldococcus jannaschii (strain ATCC 43067 / DSM 2661 / JAL-1 / JCM 10045 / NBRC 100440) (Methanococcus jannaschii).